The chain runs to 72 residues: Hypotensin (72 aa).

The first 24 residues, Met-1 to Gly-24, serve as a signal peptide directing secretion. 2 propeptides span residues Met-25–Arg-35 and Arg-61–Asp-72.

The protein belongs to the non-disulfide-bridged peptide (NDBP) superfamily. As to expression, expressed by the venom gland.

The protein resides in the secreted. Functionally, potentiates the hypotensive action of bradykinin (BK) in normotensive rats, and induces a vasorelaxant effect in mesenteric artery rings that is induced by endothelium-dependent release of nitric oxide (NO). Does not inhibit angiotensin converting enzyme (ACE). Shows neither hemolytic activity nor cytotoxicity to normal and cancer cells. Shows moderate antimicrobial activity against the fungi Candida albicans and the filamentous fungus Trichophyton rubrum, as well as against the bacteria C.albicans (MIC=128 ug/mL), C.tropicalis (MIC=128 ug/mL) and Aspergillus flavus (MIC=128 ug/mL). Has no antimicrobial activity against S.aureus, S.epidermidis and P.aeruginosa. The sequence is that of Hypotensin from Tityus stigmurus (Brazilian scorpion).